We begin with the raw amino-acid sequence, 718 residues long: Cyclomaltodextrin glucanotransferase (718 aa).

Positions 1-34 (MFQMAKRAFLSTTLTLGLLAGSALPFLPASAAYA) are cleaved as a signal peptide. Residues 35–172 (DPDIAVTNKQ…GIKIIIDFAP (138 aa)) are A1. Ca(2+) contacts are provided by aspartate 61, asparagine 63, asparagine 66, and asparagine 67. A disulfide bridge connects residues cysteine 77 and cysteine 84. Positions 85 and 87 each coordinate Ca(2+). 134 to 135 (YW) serves as a coordination point for substrate. Position 173 (asparagine 173) interacts with Ca(2+). The interval 173-236 (NHTSPAMETD…NLYDLADFNH (64 aa)) is b. Histidine 174 provides a ligand contact to substrate. Isoleucine 224 contacts Ca(2+). Position 227–230 (227–230 (NLYD)) interacts with substrate. Aspartate 233 serves as a coordination point for Ca(2+). The tract at residues 237–440 (NNATIDKYFK…LRKSNPAIAY (204 aa)) is A2. Residue arginine 261 participates in substrate binding. Aspartate 263 acts as the Nucleophile in catalysis. A substrate-binding site is contributed by 266–267 (KH). Ca(2+) is bound at residue histidine 267. Glutamate 291 serves as the catalytic Proton donor. Substrate is bound by residues histidine 361, aspartate 405, and arginine 409. Residues 441–528 (GSTQQRWINN…ATAVWQYTAA (88 aa)) are c. Residues 529-614 (ETTPTIGHVG…SNAYNHFTIL (86 aa)) are d. Residues 532–612 (PTIGHVGPVM…VNSNAYNHFT (81 aa)) enclose the IPT/TIG domain. The CBM20 domain maps to 613-718 (ILTGDQVTVR…GTATVTVNWQ (106 aa)). The tract at residues 615–718 (TGDQVTVRFV…GTATVTVNWQ (104 aa)) is e.

Belongs to the glycosyl hydrolase 13 family. Monomer. It depends on Ca(2+) as a cofactor.

Its subcellular location is the secreted. It carries out the reaction Cyclizes part of a (1-&gt;4)-alpha-D-glucan chain by formation of a (1-&gt;4)-alpha-D-glucosidic bond.. The protein is Cyclomaltodextrin glucanotransferase (cgt) of Bacillus sp. (strain 6.6.3).